A 170-amino-acid polypeptide reads, in one-letter code: Large ribosomal subunit protein uL15 (170 aa).

Over residues 1-12 (MKLHDLRPAEGA) the composition is skewed to basic and acidic residues. Residues 1–52 (MKLHDLRPAEGAHRKRKRIGRGHGSGKGKTGGKGMMGQKARSGPGPYRTFEG) form a disordered region. A compositionally biased stretch (basic residues) spans 13-26 (HRKRKRIGRGHGSG).

Belongs to the universal ribosomal protein uL15 family. Part of the 50S ribosomal subunit.

Its function is as follows. Binds to the 23S rRNA. The chain is Large ribosomal subunit protein uL15 from Chloroflexus aurantiacus (strain ATCC 29366 / DSM 635 / J-10-fl).